The following is a 387-amino-acid chain: Protein RecA (387 aa).

80–87 (GPESSGKT) contributes to the ATP binding site. The interval 348–387 (LDDSEVAETEEETTASKTKAKAKKEEKXVETEEIELELQD) is disordered. Composition is skewed to acidic residues over residues 349 to 360 (DDSEVAETEEET) and 378 to 387 (TEEIELELQD).

It belongs to the RecA family.

It is found in the cytoplasm. Can catalyze the hydrolysis of ATP in the presence of single-stranded DNA, the ATP-dependent uptake of single-stranded DNA by duplex DNA, and the ATP-dependent hybridization of homologous single-stranded DNAs. It interacts with LexA causing its activation and leading to its autocatalytic cleavage. The polypeptide is Protein RecA (Lactococcus lactis subsp. cremoris (Streptococcus cremoris)).